The following is a 223-amino-acid chain: ATP-dependent dethiobiotin synthetase BioD (223 aa).

11 to 16 lines the ATP pocket; sequence DIGKTY. Thr15 is a Mg(2+) binding site. Residue Lys36 is part of the active site. Thr40 is a binding site for substrate. ATP-binding positions include Asp50, 110–113, and 174–175; these read EGAG and NN. Mg(2+)-binding residues include Asp50 and Glu110.

Belongs to the dethiobiotin synthetase family. In terms of assembly, homodimer. Requires Mg(2+) as cofactor.

The protein localises to the cytoplasm. The catalysed reaction is (7R,8S)-7,8-diammoniononanoate + CO2 + ATP = (4R,5S)-dethiobiotin + ADP + phosphate + 3 H(+). It participates in cofactor biosynthesis; biotin biosynthesis; biotin from 7,8-diaminononanoate: step 1/2. Its function is as follows. Catalyzes a mechanistically unusual reaction, the ATP-dependent insertion of CO2 between the N7 and N8 nitrogen atoms of 7,8-diaminopelargonic acid (DAPA, also called 7,8-diammoniononanoate) to form a ureido ring. This chain is ATP-dependent dethiobiotin synthetase BioD, found in Staphylococcus epidermidis (strain ATCC 35984 / DSM 28319 / BCRC 17069 / CCUG 31568 / BM 3577 / RP62A).